The sequence spans 274 residues: Acetyl-coenzyme A carboxylase carboxyl transferase subunit beta (274 aa).

Residues 18-274 (IWTKCKKCDY…FYNRQCFLKF (257 aa)) enclose the CoA carboxyltransferase N-terminal domain. The Zn(2+) site is built by Cys-22, Cys-25, Cys-41, and Cys-44. Residues 22–44 (CKKCDYILLQKDFEENLMVCPKC) form a C4-type zinc finger.

The protein belongs to the AccD/PCCB family. As to quaternary structure, acetyl-CoA carboxylase is a heterohexamer composed of biotin carboxyl carrier protein (AccB), biotin carboxylase (AccC) and two subunits each of ACCase subunit alpha (AccA) and ACCase subunit beta (AccD). Requires Zn(2+) as cofactor.

The protein resides in the cytoplasm. The enzyme catalyses N(6)-carboxybiotinyl-L-lysyl-[protein] + acetyl-CoA = N(6)-biotinyl-L-lysyl-[protein] + malonyl-CoA. It functions in the pathway lipid metabolism; malonyl-CoA biosynthesis; malonyl-CoA from acetyl-CoA: step 1/1. In terms of biological role, component of the acetyl coenzyme A carboxylase (ACC) complex. Biotin carboxylase (BC) catalyzes the carboxylation of biotin on its carrier protein (BCCP) and then the CO(2) group is transferred by the transcarboxylase to acetyl-CoA to form malonyl-CoA. The sequence is that of Acetyl-coenzyme A carboxylase carboxyl transferase subunit beta from Endomicrobium trichonymphae.